A 91-amino-acid chain; its full sequence is Cell division protein FtsB (91 aa).

Over 1–3 (MKF) the chain is Cytoplasmic. The chain crosses the membrane as a helical span at residues 4 to 21 (IVGLLLVLLLALQYQLWI). The Periplasmic portion of the chain corresponds to 22-91 (SKDGLGELRQ…ETFFQVVEEP (70 aa)). Residues 26–74 (LGELRQLSRSIKQQRHENATLIERNQVLKAEVQDLKSGLDALEERARSG) adopt a coiled-coil conformation.

It belongs to the FtsB family. As to quaternary structure, part of a complex composed of FtsB, FtsL and FtsQ.

It is found in the cell inner membrane. In terms of biological role, essential cell division protein. May link together the upstream cell division proteins, which are predominantly cytoplasmic, with the downstream cell division proteins, which are predominantly periplasmic. The protein is Cell division protein FtsB of Nitrosococcus oceani (strain ATCC 19707 / BCRC 17464 / JCM 30415 / NCIMB 11848 / C-107).